The chain runs to 172 residues: Zinc finger protein 580 (172 aa).

The disordered stretch occupies residues 1-92 (MLLLPPRPPH…PGEPGPRKGY (92 aa)). A compositionally biased stretch (pro residues) spans 19 to 30 (MDPPPPKTPPFP). K31 is covalently cross-linked (Glycyl lysine isopeptide (Lys-Gly) (interchain with G-Cter in SUMO2)). The segment at 92-114 (YSCPECARVFASPLRLQSHRVSH) adopts a C2H2-type 1 zinc-finger fold. K118 is covalently cross-linked (Glycyl lysine isopeptide (Lys-Gly) (interchain with G-Cter in SUMO2)). 2 C2H2-type zinc fingers span residues 120 to 142 (FTCG…RATH) and 150 to 172 (HTCP…VRLH).

Interacts with SMAD2.

The protein localises to the nucleus. Its function is as follows. Involved in the regulation of endothelial cell proliferation and migration. Mediates H(2)O(2)-induced leukocyte chemotaxis by elevating interleukin-8 production and may play a role in inflammation. May be involved in transcriptional regulation. In Mus musculus (Mouse), this protein is Zinc finger protein 580 (Znf580).